A 489-amino-acid polypeptide reads, in one-letter code: Ketol-acid reductoisomerase (NADP(+)) (489 aa).

A KARI N-terminal Rossmann domain is found at 16 to 207; the sequence is IKKCRFMEKK…GGHRAGVLES (192 aa). NADP(+)-binding positions include 44 to 47, Arg-67, Ser-77, and 107 to 109; these read CGSQ and DKQ. His-131 is a catalytic residue. An NADP(+)-binding site is contributed by Gly-157. 2 KARI C-terminal knotted domains span residues 208-343 and 344-483; these read SFVA…QSPD and YDKK…MKNM. 4 residues coordinate Mg(2+): Asp-216, Glu-220, Glu-388, and Glu-392. Residue Ser-413 coordinates substrate.

The protein belongs to the ketol-acid reductoisomerase family. The cofactor is Mg(2+).

The catalysed reaction is (2R)-2,3-dihydroxy-3-methylbutanoate + NADP(+) = (2S)-2-acetolactate + NADPH + H(+). The enzyme catalyses (2R,3R)-2,3-dihydroxy-3-methylpentanoate + NADP(+) = (S)-2-ethyl-2-hydroxy-3-oxobutanoate + NADPH + H(+). It functions in the pathway amino-acid biosynthesis; L-isoleucine biosynthesis; L-isoleucine from 2-oxobutanoate: step 2/4. It participates in amino-acid biosynthesis; L-valine biosynthesis; L-valine from pyruvate: step 2/4. In terms of biological role, involved in the biosynthesis of branched-chain amino acids (BCAA). Catalyzes an alkyl-migration followed by a ketol-acid reduction of (S)-2-acetolactate (S2AL) to yield (R)-2,3-dihydroxy-isovalerate. In the isomerase reaction, S2AL is rearranged via a Mg-dependent methyl migration to produce 3-hydroxy-3-methyl-2-ketobutyrate (HMKB). In the reductase reaction, this 2-ketoacid undergoes a metal-dependent reduction by NADPH to yield (R)-2,3-dihydroxy-isovalerate. This chain is Ketol-acid reductoisomerase (NADP(+)), found in Buchnera aphidicola subsp. Diuraphis noxia.